Reading from the N-terminus, the 411-residue chain is MFHPRARTMLLLSLPALIIGVASSLVLIAAMKIASVFQQFLWQRLPASIGIAYDSPFWIVGMLTLTGIVVGLIIRYSPGHAGPDPAIEPLISMPVSPSALPGLLLALIIGLAGGVSLGPEHPIMTINIALAAAFGSRLFPRITALDWTILASAGTIGALFGTPVAAALIFSQTLSGSNDIPMWDRLFAPLMAAAAGSLTTSLFFHPHFSLPIAHYTQMRLVDIASGAIVAAIAIAAGMVAVWCLPRLHELLHRLKNPVLILGIGGFILGILGVIGGPLTLFKGLDEMQQMAFSQTLGAGDYFTLAVVKLAALVIAAASGFRGGRIFPAVFIGAALGLMLHAHVEAVPAAITVSCAILGLVLVVTRDGWLSLFMAAVVVPDTNLLPLLCIVMLPAWLLLAGKPLLAANRHEP.

The next 11 membrane-spanning stretches (helical) occupy residues 9–29 (MLLLSLPALIIGVASSLVLIA), 54–74 (DSPFWIVGMLTLTGIVVGLII), 99–119 (ALPGLLLALIIGLAGGVSLGP), 149–169 (ILASAGTIGALFGTPVAAALI), 186–206 (LFAPLMAAAAGSLTTSLFFHP), 223–243 (IASGAIVAAIAIAAGMVAVWC), 258–278 (VLILGIGGFILGILGVIGGPL), 296–316 (LGAGDYFTLAVVKLAALVIAA), 322–342 (GGRIFPAVFIGAALGLMLHAH), 343–363 (VEAVPAAITVSCAILGLVLVV), and 386–406 (LLCIVMLPAWLLLAGKPLLAA).

The protein belongs to the chloride channel (TC 2.A.49) family.

It localises to the cell membrane. In Salmonella paratyphi A (strain ATCC 9150 / SARB42), this protein is Putative ion-transport protein YfeO.